We begin with the raw amino-acid sequence, 241 residues long: Chaperone protein HifB (241 aa).

The first 27 residues, 1 to 27 (MGKTMFKKTLLFFTALFFTALCAFSAN), serve as a signal peptide directing secretion.

This sequence belongs to the periplasmic pilus chaperone family.

The protein localises to the periplasm. Its function is as follows. Mediates assembly of pili by forming soluble multimeric complexes with pili subunits as an intermediate step in the assembly process. This protein is involved in type B pili (HifA) assembly. This Haemophilus influenzae protein is Chaperone protein HifB (hifB).